The chain runs to 420 residues: F-box protein At5g07610 (420 aa).

Residues 1–25 (MSSCSRTRTKAPRSARSRRNGGFSS) form a disordered region. Residues 7 to 19 (TRTKAPRSARSRR) show a composition bias toward basic residues. The 51-residue stretch at 27–77 (SATIVADIDDVLIQILSFLPIKTLLRFKRVSKRWLSLITNPVFSNRVIKSN) folds into the F-box domain.

The sequence is that of F-box protein At5g07610 from Arabidopsis thaliana (Mouse-ear cress).